The following is a 152-amino-acid chain: Deoxyuridine 5'-triphosphate nucleotidohydrolase (152 aa).

Substrate-binding positions include 63–65 (RSG), asparagine 76, and 80–82 (TID). Residues 129–152 (LDDTERGQGGYGSTGVSAMPPVDG) form a disordered region.

It belongs to the dUTPase family. Requires Mg(2+) as cofactor.

It catalyses the reaction dUTP + H2O = dUMP + diphosphate + H(+). Its pathway is pyrimidine metabolism; dUMP biosynthesis; dUMP from dCTP (dUTP route): step 2/2. Functionally, this enzyme is involved in nucleotide metabolism: it produces dUMP, the immediate precursor of thymidine nucleotides and it decreases the intracellular concentration of dUTP so that uracil cannot be incorporated into DNA. In Cutibacterium acnes (strain DSM 16379 / KPA171202) (Propionibacterium acnes), this protein is Deoxyuridine 5'-triphosphate nucleotidohydrolase.